Here is a 297-residue protein sequence, read N- to C-terminus: HTH-type transcriptional regulator ArgP (297 aa).

In terms of domain architecture, HTH lysR-type spans 4–60; it reads PDYRTLQALDAVIRERGFERAAQKLCITQSAVSQRIKQLENLFGQPLLVRTIPPRPT. Residues 21–40 constitute a DNA-binding region (H-T-H motif); that stretch reads FERAAQKLCITQSAVSQRIK.

This sequence belongs to the LysR transcriptional regulatory family. As to quaternary structure, homodimer.

Controls the transcription of genes involved in arginine and lysine metabolism. This Pectobacterium atrosepticum (strain SCRI 1043 / ATCC BAA-672) (Erwinia carotovora subsp. atroseptica) protein is HTH-type transcriptional regulator ArgP.